A 239-amino-acid polypeptide reads, in one-letter code: tRNA (guanine-N(7)-)-methyltransferase (239 aa).

Glu-69, Glu-94, Asp-121, and Asp-144 together coordinate S-adenosyl-L-methionine. Asp-144 is a catalytic residue. Substrate is bound by residues Lys-148, Asp-180, and 217–220 (TKFE).

It belongs to the class I-like SAM-binding methyltransferase superfamily. TrmB family.

The catalysed reaction is guanosine(46) in tRNA + S-adenosyl-L-methionine = N(7)-methylguanosine(46) in tRNA + S-adenosyl-L-homocysteine. It participates in tRNA modification; N(7)-methylguanine-tRNA biosynthesis. Its function is as follows. Catalyzes the formation of N(7)-methylguanine at position 46 (m7G46) in tRNA. This Pseudoalteromonas atlantica (strain T6c / ATCC BAA-1087) protein is tRNA (guanine-N(7)-)-methyltransferase.